The primary structure comprises 81 residues: Sulfur carrier protein TusA (81 aa).

Residue cysteine 19 is the Cysteine persulfide intermediate of the active site.

Belongs to the sulfur carrier protein TusA family. In terms of assembly, interacts with IscS.

The protein resides in the cytoplasm. The protein operates within tRNA modification. Sulfur carrier protein involved in sulfur trafficking in the cell. Part of a sulfur-relay system required for 2-thiolation during synthesis of 2-thiouridine of the modified wobble base 5-methylaminomethyl-2-thiouridine (mnm(5)s(2)U) in tRNA. Interacts with IscS and stimulates its cysteine desulfurase activity. Accepts an activated sulfur from IscS, which is then transferred to TusD, and thus determines the direction of sulfur flow from IscS to 2-thiouridine formation. Also appears to be involved in sulfur transfer for the biosynthesis of molybdopterin. This Erwinia tasmaniensis (strain DSM 17950 / CFBP 7177 / CIP 109463 / NCPPB 4357 / Et1/99) protein is Sulfur carrier protein TusA.